The following is a 426-amino-acid chain: Ammonium transporter Rh type A (426 aa).

Over 1-4 (MRFK) the chain is Cytoplasmic. Residues 5–25 (FPLMAIGLEVVMIVLFALFVQ) traverse the membrane as a helical segment. Over 26–54 (YETSVNTSRNPNETESAAMDVEKTMESYP) the chain is Extracellular. 2 N-linked (GlcNAc...) asparagine glycosylation sites follow: N31 and N37. A helical membrane pass occupies residues 55–75 (FFQDVHIMVFAGFGFLMTFLW). The Cytoplasmic portion of the chain corresponds to 76 to 78 (KYG). Residues 79-99 (FSGVGINLLIAALGLQWGTII) traverse the membrane as a helical segment. At 100 to 124 (QGIFRSHGQKFLIEMKNMIHADFST) the chain is on the extracellular side. The next 2 membrane-spanning stretches (helical) occupy residues 125–145 (VTVLISFGAVLGKTSPVQMLI) and 146–166 (MTILEITVYAANEYLVFKILW). Residues 167 to 170 (ASDT) are Extracellular-facing. Residues 171 to 191 (GESMTIHAFGAYFGLAVAGIL) traverse the membrane as a helical segment. At 192 to 210 (YRSGLKEKHSNEESVYHSD) the chain is on the cytoplasmic side. A helical transmembrane segment spans residues 211-231 (LFAMIGSLFLWIFWPSFNSAT). Residues 232–241 (ADEAKKQYRA) lie on the Extracellular side of the membrane. The chain crosses the membrane as a helical span at residues 242 to 262 (IVNTYFSLAASVVTAYACSSL). The Cytoplasmic portion of the chain corresponds to 263–270 (LESRGKLN). The chain crosses the membrane as a helical span at residues 271 to 288 (MVHIQNATLAGGVAVGTC). Topologically, residues 289–292 (ADME) are extracellular. A helical transmembrane segment spans residues 293-313 (IPPYYAMIIGSIAGAVSVFGF). Over 314-331 (KFLTPLFTTKLRIHDTCG) the chain is Cytoplasmic. A helical membrane pass occupies residues 332-352 (VHNLHGLPGVIGGLAGIITVA). Topologically, residues 353–371 (LEESDSTKTVSQAAALGSS) are extracellular. Residues 372–392 (IATALVGGLITGAILKIPFWA) traverse the membrane as a helical segment. Topologically, residues 393-426 (QPPDEDCYDDSVYWEVPERKEYDNHFHELLSTLH) are cytoplasmic.

The protein belongs to the ammonium transporter (TC 2.A.49) family. Rh subfamily. Homodimer. Heterotrimer; a RHCE monomer interacts with a RHAG homodimer. Component of the ankyrin-1 complex in the erythrocyte, composed of ANK1, RHCE, RHAG, SLC4A1, EPB42, GYPA, GYPB and AQP1. Interacts with GYPB (via the N-terminal); this interaction bridges the (RHAG)2(RHCE) heterotrimer with the SLC4A1 Band 3 I dimer complexed with GYPA. In terms of processing, glycosylated.

It is found in the membrane. It catalyses the reaction methylamine(out) = methylamine(in). The catalysed reaction is NH4(+)(in) = NH4(+)(out). It carries out the reaction CO2(out) = CO2(in). In terms of biological role, component of the ankyrin-1 complex, a multiprotein complex involved in the stability and shape of the erythrocyte membrane. Heterotrimer with RHCE (RHAG)2(RHCE), that transports ammonium and its related derivative methylammonium, in both neutral and ionic forms, across the erythrocyte membrane. The transport of NH4(+) is electrogenic and masks the NH3 transport. Also, may act as a CO2 channel. Moreover in erythrocyte, regulates RHD membrane expression and is associated with rhesus blood group antigen expression. This chain is Ammonium transporter Rh type A, found in Bos taurus (Bovine).